Here is a 141-residue protein sequence, read N- to C-terminus: Nucleoside diphosphate kinase (141 aa).

ATP-binding residues include lysine 11, phenylalanine 59, arginine 87, threonine 93, arginine 104, and asparagine 114. The Pros-phosphohistidine intermediate role is filled by histidine 117.

The protein belongs to the NDK family. As to quaternary structure, homotetramer. Mg(2+) is required as a cofactor.

It is found in the cytoplasm. It carries out the reaction a 2'-deoxyribonucleoside 5'-diphosphate + ATP = a 2'-deoxyribonucleoside 5'-triphosphate + ADP. It catalyses the reaction a ribonucleoside 5'-diphosphate + ATP = a ribonucleoside 5'-triphosphate + ADP. Its function is as follows. Major role in the synthesis of nucleoside triphosphates other than ATP. The ATP gamma phosphate is transferred to the NDP beta phosphate via a ping-pong mechanism, using a phosphorylated active-site intermediate. This is Nucleoside diphosphate kinase from Halorhodospira halophila (strain DSM 244 / SL1) (Ectothiorhodospira halophila (strain DSM 244 / SL1)).